The sequence spans 214 residues: ATP synthase subunit 5, mitochondrial (214 aa).

The N-terminal 24 residues, 1–24 (MFASRAIRMMSMRPMARTMATKAA), are a transit peptide targeting the mitochondrion.

As to quaternary structure, F-type ATP synthases have 2 components, the catalytic core F(1) and the membrane-embedded component F(0), linked together by a central stalk and a peripheral stalk. The central stalk, also called rotor shaft, is often seen as part of F(1). The peripheral stalk is seen as part of F(0). F(0) contains the membrane channel next to the rotor. F-type ATP synthases form dimers but each monomer functions independently in ATP generation. The dimer consists of 17 different polypeptides: ATP1 (subunit alpha, 3 molecules per monomer, part of F(1)), ATP2 (subunit beta, 3 copies per monomer, part of F(1)), ATP3 (subunit gamma, part of the central stalk), ATP4 (subunit b, part of the peripheral stalk), ATP5/OSCP (subunit 5/OSCP, part of the peripheral stalk), ATP6 (subunit a, part of the peripheral stalk), ATP7 (subunit d, part of the peripheral stalk), ATP8 (subunit 8, part of the peripheral stalk), OLI1 (subunit c, part of the rotor, 10 molecules per monomer), ATP14 (subunit h, part of the peripheral stalk), ATP15 (subunit epsilon, part of the central stalk), ATP16 (subunit delta, part of the central stalk), ATP17 (subunit f, part of the peripheral stalk), ATP18 (subunit i/j, part of the peripheral stalk), ATP19 (subunit k, dimer-specific, at interface between monomers), ATP20 (subunit g, at interface between monomers), TIM11 (subunit e, at interface between monomers).

It localises to the mitochondrion inner membrane. In terms of biological role, mitochondrial membrane ATP synthase (F(1)F(0) ATP synthase or Complex V) produces ATP from ADP in the presence of a proton gradient across the membrane which is generated by electron transport complexes of the respiratory chain. F-type ATP synthases consist of two structural domains, F(1) - containing the extramembraneous catalytic core, and F(0) - containing the membrane proton channel, linked together by a central stalk and a peripheral stalk. During catalysis, ATP synthesis in the catalytic domain of F(1) is coupled via a rotary mechanism of the central stalk subunits to proton translocation. Part of the complex F(0) domain and the peripheral stalk, which acts as a stator to hold the catalytic alpha/ATP1(3)beta/ATP2(3) subcomplex and subunit a/ATP6 static relative to the rotary elements. The protein is ATP synthase subunit 5, mitochondrial of Yarrowia lipolytica (strain CLIB 122 / E 150) (Yeast).